A 451-amino-acid chain; its full sequence is Tubulin gamma-1 chain (451 aa).

Serine 131 bears the Phosphoserine; by BRSK1 mark. 142-148 (AGGTGSG) is a GTP binding site.

The protein belongs to the tubulin family. As to quaternary structure, component of the gamma-tubulin ring complex (gTuRC) consisting of TUBGCP2, TUBGCP3, TUBGCP4, TUBGCP5 and TUBGCP6 and gamma-tubulin TUBG1 or TUBG2. TUBGCP2, TUBGCP3, TUBGCP4, TUBGCP5 and TUBGCP6 assemble in a 5:5:2:1:1 stoichiometry; each is associated with a gamma-tubulin, thereby arranging 14 gamma-tubulins in a helical manner. Gamma-tubulin at the first position is blocked by TUBGCP3 at the last position, allowing 13 protafilaments to grow into a microtubule. The gTuRC (via TUBGCP3 and TUBGCP6) interacts with ACTB and MZT1; the interactions form a luminal bridge that stabilizes the initial structure during complex assembly. The gTuRC (via TUBGCP2) interacts with MZT2A/MZT2B and CDK5RAP2 (via CM1 motif); the interactions play a role in gTuRC activation. Interacts with alpha-beta tubulin heterodimers; the interaction allows microtubules to nucleate from the gTuRC. Interacts with B9D2. Interacts with CDK5RAP2; the interaction is leading to centrosomal localization of TUBG1 and CDK5RAP2. Interacts with CIMAP3. Interacts with SAS6 and NUP62 at the centrosome. Interacts with EML3 (phosphorylated at 'Thr-881') and HAUS8. Interacts with DNM2; this interaction may participate in centrosome cohesion. Interacts with CCDC66. Post-translationally, phosphorylation at Ser-131 by BRSK1 regulates centrosome duplication, possibly by mediating relocation of gamma-tubulin and its associated proteins from the cytoplasm to the centrosome.

It localises to the cytoplasm. It is found in the cytoskeleton. The protein localises to the microtubule organizing center. The protein resides in the centrosome. Its subcellular location is the spindle. In terms of biological role, tubulin is the major constituent of microtubules, protein filaments consisting of alpha- and beta-tubulin heterodimers. Gamma-tubulin is a key component of the gamma-tubulin ring complex (gTuRC) which mediates microtubule nucleation. The gTuRC regulates the minus-end nucleation of alpha-beta tubulin heterodimers that grow into microtubule protafilaments, a critical step in centrosome duplication and spindle formation. The sequence is that of Tubulin gamma-1 chain from Bos taurus (Bovine).